Reading from the N-terminus, the 188-residue chain is Probable thymidylate kinase (188 aa).

ATP is bound at residue G11–T18.

This sequence belongs to the thymidylate kinase family.

The catalysed reaction is dTMP + ATP = dTDP + ADP. In Methanocaldococcus jannaschii (strain ATCC 43067 / DSM 2661 / JAL-1 / JCM 10045 / NBRC 100440) (Methanococcus jannaschii), this protein is Probable thymidylate kinase (tmk).